The following is a 325-amino-acid chain: ATP-dependent 6-phosphofructokinase (325 aa).

ATP is bound at residue Gly12. 22 to 26 (RTIVK) provides a ligand contact to ADP. ATP is bound by residues 73-74 (RY) and 103-106 (GDGS). Asp104 lines the Mg(2+) pocket. 126–128 (TID) serves as a coordination point for substrate. The active-site Proton acceptor is Asp128. Residue Arg155 coordinates ADP. A substrate-binding site is contributed by 170–172 (MGH). ADP-binding positions include 186–188 (GAE), Lys213, and 215–217 (KRS). Substrate-binding positions include Glu224, Arg246, and 252-255 (HTQR).

The protein belongs to the phosphofructokinase type A (PFKA) family. ATP-dependent PFK group I subfamily. Prokaryotic clade 'B1' sub-subfamily. As to quaternary structure, homotetramer. Mg(2+) is required as a cofactor.

The protein localises to the cytoplasm. The enzyme catalyses beta-D-fructose 6-phosphate + ATP = beta-D-fructose 1,6-bisphosphate + ADP + H(+). It participates in carbohydrate degradation; glycolysis; D-glyceraldehyde 3-phosphate and glycerone phosphate from D-glucose: step 3/4. Allosterically activated by ADP and other diphosphonucleosides, and allosterically inhibited by phosphoenolpyruvate. Functionally, catalyzes the phosphorylation of D-fructose 6-phosphate to fructose 1,6-bisphosphate by ATP, the first committing step of glycolysis. The chain is ATP-dependent 6-phosphofructokinase from Mycoplasma mobile (strain ATCC 43663 / 163K / NCTC 11711) (Mesomycoplasma mobile).